The primary structure comprises 742 residues: Collectin-12 (742 aa).

The Cytoplasmic portion of the chain corresponds to 1–37 (MKDDFAEEEEVHSFGYKRFGIQEGTQCTKCKNNWALK). The helical; Signal-anchor for type II membrane protein transmembrane segment at 38–58 (LSIILLYILCALLTITVAILG) threads the bilayer. The Extracellular portion of the chain corresponds to 59–742 (YKVVEKMDNV…DRERELAITL (684 aa)). N-linked (GlcNAc...) asparagine glycosylation is present at N67. The stretch at 73–141 (ETSRQTYDDK…NKDTLEKLQA (69 aa)) forms a coiled coil. 2 N-linked (GlcNAc...) asparagine glycosylation sites follow: N159 and N168. The stretch at 215–254 (QQRNLITNLQRSVDDTSQAIQRIKNDFQNLQQVFLQAKKD) forms a coiled coil. N271 carries an N-linked (GlcNAc...) asparagine glycan. Residues 296–328 (QMDNITTASQANEQNLKDLQDVHRDAENRTAAK) are a coiled coil. Residues 439–591 (TILQGPPGPR…PPGPSGAAVP (153 aa)) are disordered. 2 consecutive Collagen-like domains span residues 443-502 (GPPG…KGSK) and 527-586 (GPPG…PGPS). Low complexity predominate over residues 501–514 (SKGLQGSKGSRGSP). The segment covering 516–532 (KPGPQGPSGDPGPPGPP) has biased composition (pro residues). Residues 534–556 (KDGLPGPQGPPGFQGLQGTVGEP) are compositionally biased toward low complexity. 3 disulfides stabilise this stretch: C607–C618, C635–C730, and C708–C722. A C-type lectin domain is found at 614 to 731 (FTDKCYYFST…CEDMNHFICE (118 aa)). The Ca(2+) site is built by F644, N646, E650, D670, and E674. A carbohydrate contacts are provided by K691, Q694, and D696. 8 residues coordinate Ca(2+): Q694, D696, N697, E706, D707, N718, D719, and E731. E706 is a binding site for a carbohydrate. The a carbohydrate site is built by N718 and D719.

The extracellular domain forms a stable trimer. The extracellular domain interacts with fibrillar amyloid-beta peptide.

It localises to the membrane. Its function is as follows. Scavenger receptor that displays several functions associated with host defense. Promotes binding and phagocytosis of Gram-positive, Gram-negative bacteria and yeast. Mediates the recognition, internalization and degradation of oxidatively modified low density lipoprotein (oxLDL) by vascular endothelial cells. Binds to several carbohydrates including Gal-type ligands, D-galactose, L- and D-fucose, GalNAc, T and Tn antigens in a calcium-dependent manner and internalizes specifically GalNAc in nurse-like cells. Also binds to sialyl Lewis X or a trisaccharide and asialo-orosomucoid (ASOR). The chain is Collectin-12 (COLEC12) from Bos taurus (Bovine).